A 327-amino-acid chain; its full sequence is tRNA dimethylallyltransferase (327 aa).

14 to 21 (GPTASGKT) serves as a coordination point for ATP. 16–21 (TASGKT) is a binding site for substrate. Interaction with substrate tRNA regions lie at residues 39–42 (DSAL) and 163–167 (QRIQR).

Belongs to the IPP transferase family. As to quaternary structure, monomer. Mg(2+) is required as a cofactor.

The catalysed reaction is adenosine(37) in tRNA + dimethylallyl diphosphate = N(6)-dimethylallyladenosine(37) in tRNA + diphosphate. Functionally, catalyzes the transfer of a dimethylallyl group onto the adenine at position 37 in tRNAs that read codons beginning with uridine, leading to the formation of N6-(dimethylallyl)adenosine (i(6)A). The sequence is that of tRNA dimethylallyltransferase from Xanthomonas oryzae pv. oryzae (strain PXO99A).